The sequence spans 322 residues: Lipoyl synthase (322 aa).

Positions 1–14 are enriched in polar residues; it reads MKTLDENQAPSRQT. The interval 1–30 is disordered; that stretch reads MKTLDENQAPSRQTPESHRRGAEKLSRIPV. Basic and acidic residues predominate over residues 15–26; that stretch reads PESHRRGAEKLS. Cys70, Cys75, Cys81, Cys96, Cys100, Cys103, and Ser310 together coordinate [4Fe-4S] cluster. The Radical SAM core domain maps to 82 to 299; that stretch reads FGHGTATFMI…AGYARELGFA (218 aa).

This sequence belongs to the radical SAM superfamily. Lipoyl synthase family. The cofactor is [4Fe-4S] cluster.

It is found in the cytoplasm. It catalyses the reaction [[Fe-S] cluster scaffold protein carrying a second [4Fe-4S](2+) cluster] + N(6)-octanoyl-L-lysyl-[protein] + 2 oxidized [2Fe-2S]-[ferredoxin] + 2 S-adenosyl-L-methionine + 4 H(+) = [[Fe-S] cluster scaffold protein] + N(6)-[(R)-dihydrolipoyl]-L-lysyl-[protein] + 4 Fe(3+) + 2 hydrogen sulfide + 2 5'-deoxyadenosine + 2 L-methionine + 2 reduced [2Fe-2S]-[ferredoxin]. Its pathway is protein modification; protein lipoylation via endogenous pathway; protein N(6)-(lipoyl)lysine from octanoyl-[acyl-carrier-protein]: step 2/2. In terms of biological role, catalyzes the radical-mediated insertion of two sulfur atoms into the C-6 and C-8 positions of the octanoyl moiety bound to the lipoyl domains of lipoate-dependent enzymes, thereby converting the octanoylated domains into lipoylated derivatives. This chain is Lipoyl synthase, found in Methylococcus capsulatus (strain ATCC 33009 / NCIMB 11132 / Bath).